We begin with the raw amino-acid sequence, 66 residues long: MQTGKVKWFNSEKGFGFIEVEGGDDVFVHFSAIQGDGFKTLEEGQEVSFEIVEGNRGPQAANVTKN.

The region spanning 4-63 (GKVKWFNSEKGFGFIEVEGGDDVFVHFSAIQGDGFKTLEEGQEVSFEIVEGNRGPQAANV) is the CSD domain.

As to quaternary structure, homodimer.

Its subcellular location is the cytoplasm. This is Cold shock-like protein CspD (cspD) from Bacillus anthracis.